The following is a 341-amino-acid chain: S-adenosylmethionine:tRNA ribosyltransferase-isomerase (341 aa).

This sequence belongs to the QueA family. Monomer.

The protein localises to the cytoplasm. It carries out the reaction 7-aminomethyl-7-carbaguanosine(34) in tRNA + S-adenosyl-L-methionine = epoxyqueuosine(34) in tRNA + adenine + L-methionine + 2 H(+). It functions in the pathway tRNA modification; tRNA-queuosine biosynthesis. In terms of biological role, transfers and isomerizes the ribose moiety from AdoMet to the 7-aminomethyl group of 7-deazaguanine (preQ1-tRNA) to give epoxyqueuosine (oQ-tRNA). The polypeptide is S-adenosylmethionine:tRNA ribosyltransferase-isomerase (Chlorobium phaeovibrioides (strain DSM 265 / 1930) (Prosthecochloris vibrioformis (strain DSM 265))).